The chain runs to 102 residues: Small ribosomal subunit protein uS10 (102 aa).

It belongs to the universal ribosomal protein uS10 family. Part of the 30S ribosomal subunit.

In terms of biological role, involved in the binding of tRNA to the ribosomes. This is Small ribosomal subunit protein uS10 from Akkermansia muciniphila (strain ATCC BAA-835 / DSM 22959 / JCM 33894 / BCRC 81048 / CCUG 64013 / CIP 107961 / Muc).